Consider the following 206-residue polypeptide: Thymidylate kinase (206 aa).

11–18 (GIDGAGKT) contacts ATP.

It belongs to the thymidylate kinase family.

It carries out the reaction dTMP + ATP = dTDP + ADP. In terms of biological role, phosphorylation of dTMP to form dTDP in both de novo and salvage pathways of dTTP synthesis. The sequence is that of Thymidylate kinase from Burkholderia mallei (strain NCTC 10247).